Reading from the N-terminus, the 325-residue chain is ATP synthase subunit gamma, mitochondrial (325 aa).

The transit peptide at 1-42 directs the protein to the mitochondrion; that stretch reads MAMAVFRREGRRLLPSIAARPIAAIRSPLSSDQEEGLLGVRS.

It belongs to the ATPase gamma chain family. F-type ATPases have 2 components, CF(1) - the catalytic core - and CF(0) - the membrane proton channel. CF(1) has five subunits: alpha(3), beta(3), gamma(1), delta(1), epsilon(1). CF(0) has three main subunits: a, b and c.

It is found in the mitochondrion. The protein resides in the mitochondrion inner membrane. Mitochondrial membrane ATP synthase (F(1)F(0) ATP synthase or Complex V) produces ATP from ADP in the presence of a proton gradient across the membrane which is generated by electron transport complexes of the respiratory chain. F-type ATPases consist of two structural domains, F(1) - containing the extramembraneous catalytic core, and F(0) - containing the membrane proton channel, linked together by a central stalk and a peripheral stalk. During catalysis, ATP synthesis in the catalytic domain of F(1) is coupled via a rotary mechanism of the central stalk subunits to proton translocation. Part of the complex F(1) domain and the central stalk which is part of the complex rotary element. The gamma subunit protrudes into the catalytic domain formed of alpha(3)beta(3). Rotation of the central stalk against the surrounding alpha(3)beta(3) subunits leads to hydrolysis of ATP in three separate catalytic sites on the beta subunits. This Arabidopsis thaliana (Mouse-ear cress) protein is ATP synthase subunit gamma, mitochondrial (ATPC).